The sequence spans 318 residues: Ferrochelatase (318 aa).

Positions 186 and 264 each coordinate Fe cation.

This sequence belongs to the ferrochelatase family.

It localises to the cytoplasm. The catalysed reaction is heme b + 2 H(+) = protoporphyrin IX + Fe(2+). Its pathway is porphyrin-containing compound metabolism; protoheme biosynthesis; protoheme from protoporphyrin-IX: step 1/1. Functionally, catalyzes the ferrous insertion into protoporphyrin IX. The protein is Ferrochelatase of Chlamydia caviae (strain ATCC VR-813 / DSM 19441 / 03DC25 / GPIC) (Chlamydophila caviae).